The primary structure comprises 150 residues: Protein Turandot X (150 aa).

An N-terminal signal peptide occupies residues 1-22 (MGLHIGSLLICVFLGILPFATA). The segment at 127 to 150 (REEGQSNHANSPTTLPSRIQKMTK) is disordered. Residues 132 to 150 (SNHANSPTTLPSRIQKMTK) show a composition bias toward polar residues.

The protein belongs to the Turandot family.

It localises to the secreted. Its function is as follows. A humoral factor that may play a role in stress tolerance. The polypeptide is Protein Turandot X (Drosophila simulans (Fruit fly)).